Reading from the N-terminus, the 310-residue chain is p-hydroxybenzoic acid efflux pump subunit AaeA (310 aa).

The chain crosses the membrane as a helical span at residues 12–32 (VITLLLVIIAIVLIFRIWVFY).

The protein belongs to the membrane fusion protein (MFP) (TC 8.A.1) family.

The protein resides in the cell inner membrane. In terms of biological role, forms an efflux pump with AaeB. In Erwinia tasmaniensis (strain DSM 17950 / CFBP 7177 / CIP 109463 / NCPPB 4357 / Et1/99), this protein is p-hydroxybenzoic acid efflux pump subunit AaeA.